A 96-amino-acid chain; its full sequence is Glutamyl-tRNA(Gln) amidotransferase subunit C (96 aa).

The protein belongs to the GatC family. Heterotrimer of A, B and C subunits.

The catalysed reaction is L-glutamyl-tRNA(Gln) + L-glutamine + ATP + H2O = L-glutaminyl-tRNA(Gln) + L-glutamate + ADP + phosphate + H(+). It catalyses the reaction L-aspartyl-tRNA(Asn) + L-glutamine + ATP + H2O = L-asparaginyl-tRNA(Asn) + L-glutamate + ADP + phosphate + 2 H(+). Its function is as follows. Allows the formation of correctly charged Asn-tRNA(Asn) or Gln-tRNA(Gln) through the transamidation of misacylated Asp-tRNA(Asn) or Glu-tRNA(Gln) in organisms which lack either or both of asparaginyl-tRNA or glutaminyl-tRNA synthetases. The reaction takes place in the presence of glutamine and ATP through an activated phospho-Asp-tRNA(Asn) or phospho-Glu-tRNA(Gln). The sequence is that of Glutamyl-tRNA(Gln) amidotransferase subunit C from Halalkalibacterium halodurans (strain ATCC BAA-125 / DSM 18197 / FERM 7344 / JCM 9153 / C-125) (Bacillus halodurans).